The chain runs to 69 residues: Large ribosomal subunit protein bL28 (69 aa).

The protein belongs to the bacterial ribosomal protein bL28 family.

This is Large ribosomal subunit protein bL28 from Nitratidesulfovibrio vulgaris (strain ATCC 29579 / DSM 644 / CCUG 34227 / NCIMB 8303 / VKM B-1760 / Hildenborough) (Desulfovibrio vulgaris).